A 232-amino-acid chain; its full sequence is Fibrillarin-like rRNA/tRNA 2'-O-methyltransferase (232 aa).

S-adenosyl-L-methionine-binding positions include 89–90 (TT), 108–109 (EF), 133–134 (DA), and 153–156 (DIAQ).

It belongs to the methyltransferase superfamily. Fibrillarin family. As to quaternary structure, interacts with nop5. Component of box C/D small ribonucleoprotein (sRNP) particles that contain rpl7ae, FlpA and nop5, plus a guide RNA.

In terms of biological role, involved in pre-rRNA and tRNA processing. Utilizes the methyl donor S-adenosyl-L-methionine to catalyze the site-specific 2'-hydroxyl methylation of ribose moieties in rRNA and tRNA. Site specificity is provided by a guide RNA that base pairs with the substrate. Methylation occurs at a characteristic distance from the sequence involved in base pairing with the guide RNA. In Methanopyrus kandleri (strain AV19 / DSM 6324 / JCM 9639 / NBRC 100938), this protein is Fibrillarin-like rRNA/tRNA 2'-O-methyltransferase.